We begin with the raw amino-acid sequence, 250 residues long: Kv channel-interacting protein 4 (250 aa).

The interval 2–44 is KIS; the sequence is NVRRVESISAQLEEASSTGGFLYTQNSTKRSIKERLMKLLPCS. 2 positions are modified to phosphoserine: Ser17 and Ser56. An EF-hand 1; degenerate domain is found at 61–117; that stretch reads LEMATVRHRPEALELLEAQSKFTKKELQILYRGFKNECPSGVVNEDTFKEIYSQFFP. EF-hand domains are found at residues 120 to 155, 156 to 191, and 204 to 239; these read DSTT…LLRG, TVQE…IYDM, and APRQ…DENI. Ca(2+) contacts are provided by Asp133, Asp135, Asn137, Asp144, Asp169, Asn171, Asp173, Tyr175, Glu180, Asp217, Asn219, Asp221, and Glu228. Residues 237–250 are interaction with KCND2; sequence ENIMRSMQLFENVI.

This sequence belongs to the recoverin family. As to quaternary structure, component of heteromultimeric potassium channels. Identified in potassium channel complexes containing KCND1, KCND2, KCND3, KCNIP1, KCNIP2, KCNIP3, KCNIP4, DPP6 and DPP10. Interacts with KCND2. Interacts with KCND3. Interacts with the C-terminus of PSEN2 and probably PSEN1.

It localises to the cell membrane. The protein resides in the cytoplasm. Its subcellular location is the peroxisome. Functionally, regulatory subunit of Kv4/D (Shal)-type voltage-gated rapidly inactivating A-type potassium channels. Modulates KCND2 channel density, inactivation kinetics and rate of recovery from inactivation in a calcium-dependent and isoform-specific manner. Modulates KCND3/Kv4.3 currents. Isoform 4 does not increase KCND2 expression at the cell membrane. Isoform 4 retains KCND3 in the endoplasmic reticulum and negatively regulates its expression at the cell membrane. The protein is Kv channel-interacting protein 4 (KCNIP4) of Bos taurus (Bovine).